The sequence spans 138 residues: Small ribosomal subunit protein uS11c (138 aa).

Residues 1–23 (MAKAIPRRSSRRNGRIGSRKSAR) are disordered.

Belongs to the universal ribosomal protein uS11 family. In terms of assembly, part of the 30S ribosomal subunit.

Its subcellular location is the plastid. The protein localises to the chloroplast. This is Small ribosomal subunit protein uS11c from Ipomoea purpurea (Common morning glory).